The primary structure comprises 540 residues: Ecdysone 20-monooxygenase (540 aa).

Heme is bound at residue cysteine 488.

The protein belongs to the cytochrome P450 family. Heme serves as cofactor. In terms of tissue distribution, strong expression by embryonic stage 10 in epidermis, decreases significantly in older embryos. Third instar larvae show expression in the midgut copper cells, Malpighian tubules and fat body. In the adult ovaries, expression is seen in both nurse cells and centripetally migrating follicle cells.

The protein localises to the mitochondrion membrane. It carries out the reaction ecdysone + AH2 + O2 = 20-hydroxyecdysone + A + H2O. It functions in the pathway steroid biosynthesis; ecdysteroid biosynthesis. Required for CNS development; midline glial cells. Involved in the metabolism of insect hormones; responsible for all ecdysone 20-monooxygenase activity during embryonic, larval and adult stages. May be involved in the breakdown of synthetic insecticides. The polypeptide is Ecdysone 20-monooxygenase (shd) (Drosophila melanogaster (Fruit fly)).